Consider the following 621-residue polypeptide: MDISMYLGCSLGAALGGVIFASYKLGLLYQLFHKTERQSPRHGGESVAEVLRSHGVKFVFTLVGGHISPILVACEKLGIRIVDTRHEATAVFAADAVARLSGTVGVAAVTAGPGLTNTVTAVKNAQMAESPLLLIGGAAATLLQGRGALQDIDQMSLFKPLCKFCASVRTVREIVPTVRKALAIAQSGTPGPVFIEFPIDTLYPYHVVEKEFAPKNTPKGLMGKIIAWYLKNHLSNLFAGAWESRDLSPLPVHIPHATDDQVQRCVELVSRAKKPVILLGSQATLPPTPADDIRKALESLGIPCFLGGMSRGLLGKNSPLHIRQNRRDALKDADLVLLAGTVCDFRLSYGRVLNRRSKIIAVNRDKSQLLKNSDMFWKPTVAIQGDAGSFLLNLSKALKGHRCPEEWPQSLKEGDNVKEKANRAKADEKTERHLNPLSVLHRVDELLAEDSIIVADGGDFVGSAAYIMRPRGPLCWLDPGAFGTLGVGGGFALGAKLCRPESEVWIVYGDGSLGYTVAEFDTFTRHKTPVIALVGNDACWSQISREQVPMLGSNVACGLAFTDYHVVADGYGGKGYLIGREDESQLEDIIKKAQKECKEGKAVLLNVLIGKTNFREGSISV.

The helical transmembrane segment at 7–29 (LGCSLGAALGGVIFASYKLGLLY) threads the bilayer. Glu-87 contacts thiamine diphosphate. A thiamine pyrophosphate binding region spans residues 459–539 (DFVGSAAYIM…VIALVGNDAC (81 aa)). 2 residues coordinate Mg(2+): Asp-510 and Asn-536.

Belongs to the TPP enzyme family. Mg(2+) is required as a cofactor. Requires thiamine diphosphate as cofactor.

The protein localises to the endoplasmic reticulum membrane. It catalyses the reaction 2-hydroxyoctadecanoyl-CoA = heptadecanal + formyl-CoA. The enzyme catalyses (2R)-hydroxyhexadecanoyl-CoA = pentadecanal + formyl-CoA. In terms of biological role, endoplasmic reticulum 2-OH acyl-CoA lyase involved in the cleavage (C1 removal) reaction in the fatty acid alpha-oxydation in a thiamine pyrophosphate (TPP)-dependent manner. The sequence is that of 2-hydroxyacyl-CoA lyase 2 (ilvbl) from Danio rerio (Zebrafish).